Reading from the N-terminus, the 91-residue chain is MQYKINMYAIVVYDVNVSRQNQIREFLRKYLYHVQRSVFEGEISPSSLYYMKKILQSYIGETDSLIIYVLRDKSCLMDKIVLGEDKDLQIY.

Asp14 contributes to the Mg(2+) binding site.

Belongs to the CRISPR-associated endoribonuclease Cas2 protein family. Homodimer, forms a heterotetramer with a Cas1 homodimer. It depends on Mg(2+) as a cofactor.

CRISPR (clustered regularly interspaced short palindromic repeat), is an adaptive immune system that provides protection against mobile genetic elements (viruses, transposable elements and conjugative plasmids). CRISPR clusters contain sequences complementary to antecedent mobile elements and target invading nucleic acids. CRISPR clusters are transcribed and processed into CRISPR RNA (crRNA). Functions as a ssRNA-specific endoribonuclease. Involved in the integration of spacer DNA into the CRISPR cassette. This Nanoarchaeum equitans (strain Kin4-M) protein is CRISPR-associated endoribonuclease Cas2.